Consider the following 43-residue polypeptide: Protein PsbN (43 aa).

The helical transmembrane segment at 7-29 threads the bilayer; sequence VTIFLSGLLVSFTGYALYTAFGQ.

Belongs to the PsbN family.

It localises to the plastid. The protein resides in the chloroplast thylakoid membrane. Functionally, may play a role in photosystem I and II biogenesis. The polypeptide is Protein PsbN (Ipomoea purpurea (Common morning glory)).